A 427-amino-acid polypeptide reads, in one-letter code: Serine--tRNA ligase (427 aa).

An L-serine-binding site is contributed by 236–238 (TAE). Position 267–269 (267–269 (RSE)) interacts with ATP. Glutamate 290 is an L-serine binding site. ATP is bound at residue 354–357 (EISS). An L-serine-binding site is contributed by serine 388.

This sequence belongs to the class-II aminoacyl-tRNA synthetase family. Type-1 seryl-tRNA synthetase subfamily. As to quaternary structure, homodimer. The tRNA molecule binds across the dimer.

Its subcellular location is the cytoplasm. The enzyme catalyses tRNA(Ser) + L-serine + ATP = L-seryl-tRNA(Ser) + AMP + diphosphate + H(+). It carries out the reaction tRNA(Sec) + L-serine + ATP = L-seryl-tRNA(Sec) + AMP + diphosphate + H(+). Its pathway is aminoacyl-tRNA biosynthesis; selenocysteinyl-tRNA(Sec) biosynthesis; L-seryl-tRNA(Sec) from L-serine and tRNA(Sec): step 1/1. Catalyzes the attachment of serine to tRNA(Ser). Is also able to aminoacylate tRNA(Sec) with serine, to form the misacylated tRNA L-seryl-tRNA(Sec), which will be further converted into selenocysteinyl-tRNA(Sec). This chain is Serine--tRNA ligase, found in Psychrobacter arcticus (strain DSM 17307 / VKM B-2377 / 273-4).